Reading from the N-terminus, the 155-residue chain is Peptide deformylase 2 (155 aa).

Fe cation contacts are provided by cysteine 90 and histidine 132. Residue glutamate 133 is part of the active site. Residue histidine 136 participates in Fe cation binding.

The protein belongs to the polypeptide deformylase family. Requires Fe(2+) as cofactor.

The enzyme catalyses N-terminal N-formyl-L-methionyl-[peptide] + H2O = N-terminal L-methionyl-[peptide] + formate. Removes the formyl group from the N-terminal Met of newly synthesized proteins. Requires at least a dipeptide for an efficient rate of reaction. N-terminal L-methionine is a prerequisite for activity but the enzyme has broad specificity at other positions. The chain is Peptide deformylase 2 from Clostridium perfringens (strain 13 / Type A).